The sequence spans 424 residues: 3-phosphoshikimate 1-carboxyvinyltransferase (424 aa).

The 3-phosphoshikimate site is built by Lys-21, Ser-22, and Arg-26. Lys-21 lines the phosphoenolpyruvate pocket. Gly-92 and Arg-120 together coordinate phosphoenolpyruvate. 3-phosphoshikimate-binding residues include Ser-163, Ser-164, Gln-165, Ser-191, Asp-306, and Lys-333. Gln-165 contacts phosphoenolpyruvate. The Proton acceptor role is filled by Asp-306. The phosphoenolpyruvate site is built by Arg-337, Arg-379, and Lys-405.

The protein belongs to the EPSP synthase family. Monomer.

It is found in the cytoplasm. The enzyme catalyses 3-phosphoshikimate + phosphoenolpyruvate = 5-O-(1-carboxyvinyl)-3-phosphoshikimate + phosphate. Its pathway is metabolic intermediate biosynthesis; chorismate biosynthesis; chorismate from D-erythrose 4-phosphate and phosphoenolpyruvate: step 6/7. Its function is as follows. Catalyzes the transfer of the enolpyruvyl moiety of phosphoenolpyruvate (PEP) to the 5-hydroxyl of shikimate-3-phosphate (S3P) to produce enolpyruvyl shikimate-3-phosphate and inorganic phosphate. The sequence is that of 3-phosphoshikimate 1-carboxyvinyltransferase from Clostridium perfringens (strain 13 / Type A).